Consider the following 341-residue polypeptide: Anthranilate phosphoribosyltransferase (341 aa).

Residues Gly83, 86-87 (GD), Thr91, 93-96 (NIST), 111-119 (KHGNRGVSS), and Ser123 contribute to the 5-phospho-alpha-D-ribose 1-diphosphate site. An anthranilate-binding site is contributed by Gly83. Ser95 lines the Mg(2+) pocket. Asn114 is an anthranilate binding site. Position 169 (Arg169) interacts with anthranilate. Residues Asp228 and Glu229 each contribute to the Mg(2+) site.

The protein belongs to the anthranilate phosphoribosyltransferase family. Homodimer. It depends on Mg(2+) as a cofactor.

The catalysed reaction is N-(5-phospho-beta-D-ribosyl)anthranilate + diphosphate = 5-phospho-alpha-D-ribose 1-diphosphate + anthranilate. It participates in amino-acid biosynthesis; L-tryptophan biosynthesis; L-tryptophan from chorismate: step 2/5. Catalyzes the transfer of the phosphoribosyl group of 5-phosphorylribose-1-pyrophosphate (PRPP) to anthranilate to yield N-(5'-phosphoribosyl)-anthranilate (PRA). In Cupriavidus necator (strain ATCC 17699 / DSM 428 / KCTC 22496 / NCIMB 10442 / H16 / Stanier 337) (Ralstonia eutropha), this protein is Anthranilate phosphoribosyltransferase.